The following is a 306-amino-acid chain: Aspartate carbamoyltransferase catalytic subunit (306 aa).

Carbamoyl phosphate-binding residues include Arg51 and Thr52. Lys80 contacts L-aspartate. Carbamoyl phosphate is bound by residues Arg101, His129, and Gln132. 2 residues coordinate L-aspartate: Arg162 and Arg224. Carbamoyl phosphate contacts are provided by Leu263 and Pro264.

It belongs to the aspartate/ornithine carbamoyltransferase superfamily. ATCase family. Heterododecamer (2C3:3R2) of six catalytic PyrB chains organized as two trimers (C3), and six regulatory PyrI chains organized as three dimers (R2).

The catalysed reaction is carbamoyl phosphate + L-aspartate = N-carbamoyl-L-aspartate + phosphate + H(+). Its pathway is pyrimidine metabolism; UMP biosynthesis via de novo pathway; (S)-dihydroorotate from bicarbonate: step 2/3. In terms of biological role, catalyzes the condensation of carbamoyl phosphate and aspartate to form carbamoyl aspartate and inorganic phosphate, the committed step in the de novo pyrimidine nucleotide biosynthesis pathway. This is Aspartate carbamoyltransferase catalytic subunit from Parabacteroides distasonis (strain ATCC 8503 / DSM 20701 / CIP 104284 / JCM 5825 / NCTC 11152).